Reading from the N-terminus, the 443-residue chain is ATP-dependent protease ATPase subunit HslU (443 aa).

Residues Ile-18 and 60-65 contribute to the ATP site; that span reads GVGKTE. Residues 137–156 are disordered; sequence PPPRDAWGQNEQSEDTSNTR. The span at 145–156 shows a compositional bias: polar residues; sequence QNEQSEDTSNTR. 3 residues coordinate ATP: Asp-256, Glu-321, and Arg-393.

Belongs to the ClpX chaperone family. HslU subfamily. As to quaternary structure, a double ring-shaped homohexamer of HslV is capped on each side by a ring-shaped HslU homohexamer. The assembly of the HslU/HslV complex is dependent on binding of ATP.

The protein localises to the cytoplasm. Its function is as follows. ATPase subunit of a proteasome-like degradation complex; this subunit has chaperone activity. The binding of ATP and its subsequent hydrolysis by HslU are essential for unfolding of protein substrates subsequently hydrolyzed by HslV. HslU recognizes the N-terminal part of its protein substrates and unfolds these before they are guided to HslV for hydrolysis. In Vibrio vulnificus (strain YJ016), this protein is ATP-dependent protease ATPase subunit HslU.